Here is a 130-residue protein sequence, read N- to C-terminus: MNLIAKLEQEEIERALAGKTIPEFAPGDTVIVNVNVVEGTRKRVQAYEGVVIAIRNRGLNSNFIVRKISSGEGVERTFQTYSPLLASIVVKRRGDVRRAKLYYLRERSGKSARIKEKLVSKDRTAAASQE.

The protein belongs to the bacterial ribosomal protein bL19 family.

Functionally, this protein is located at the 30S-50S ribosomal subunit interface and may play a role in the structure and function of the aminoacyl-tRNA binding site. The chain is Large ribosomal subunit protein bL19 from Burkholderia ambifaria (strain ATCC BAA-244 / DSM 16087 / CCUG 44356 / LMG 19182 / AMMD) (Burkholderia cepacia (strain AMMD)).